The chain runs to 538 residues: CTP synthase (538 aa).

Positions 1 to 267 (MDRAKFIFVT…LTPIARRFNL (267 aa)) are amidoligase domain. Residue Ser15 coordinates CTP. UTP is bound at residue Ser15. ATP contacts are provided by residues 16-21 (SLGKGI) and Asp73. Residues Asp73 and Glu141 each contribute to the Mg(2+) site. Residues 148-150 (DME), 188-193 (KTKPTQ), and Lys224 each bind CTP. Residues 188-193 (KTKPTQ) and Lys224 each bind UTP. A Glutamine amidotransferase type-1 domain is found at 292–538 (KIGFVGKYLS…DFIKSALSKS (247 aa)). An L-glutamine-binding site is contributed by Gly351. Cys378 acts as the Nucleophile; for glutamine hydrolysis in catalysis. L-glutamine is bound by residues 379 to 382 (LGMQ), Glu402, and Arg469. Residues His513 and Glu515 contribute to the active site.

The protein belongs to the CTP synthase family. In terms of assembly, homotetramer.

The catalysed reaction is UTP + L-glutamine + ATP + H2O = CTP + L-glutamate + ADP + phosphate + 2 H(+). The enzyme catalyses L-glutamine + H2O = L-glutamate + NH4(+). It carries out the reaction UTP + NH4(+) + ATP = CTP + ADP + phosphate + 2 H(+). Its pathway is pyrimidine metabolism; CTP biosynthesis via de novo pathway; CTP from UDP: step 2/2. With respect to regulation, allosterically activated by GTP, when glutamine is the substrate; GTP has no effect on the reaction when ammonia is the substrate. The allosteric effector GTP functions by stabilizing the protein conformation that binds the tetrahedral intermediate(s) formed during glutamine hydrolysis. Inhibited by the product CTP, via allosteric rather than competitive inhibition. Functionally, catalyzes the ATP-dependent amination of UTP to CTP with either L-glutamine or ammonia as the source of nitrogen. Regulates intracellular CTP levels through interactions with the four ribonucleotide triphosphates. This Helicobacter pylori (strain HPAG1) protein is CTP synthase.